The chain runs to 338 residues: RNA 3'-terminal phosphate cyclase (338 aa).

ATP-binding positions include Q103 and Y283–Q287. H308 serves as the catalytic Tele-AMP-histidine intermediate.

The protein belongs to the RNA 3'-terminal cyclase family. Type 1 subfamily.

It is found in the cytoplasm. It carries out the reaction a 3'-end 3'-phospho-ribonucleotide-RNA + ATP = a 3'-end 2',3'-cyclophospho-ribonucleotide-RNA + AMP + diphosphate. Catalyzes the conversion of 3'-phosphate to a 2',3'-cyclic phosphodiester at the end of RNA. The mechanism of action of the enzyme occurs in 3 steps: (A) adenylation of the enzyme by ATP; (B) transfer of adenylate to an RNA-N3'P to produce RNA-N3'PP5'A; (C) and attack of the adjacent 2'-hydroxyl on the 3'-phosphorus in the diester linkage to produce the cyclic end product. The biological role of this enzyme is unknown but it is likely to function in some aspects of cellular RNA processing. This chain is RNA 3'-terminal phosphate cyclase, found in Escherichia coli O81 (strain ED1a).